The following is a 117-amino-acid chain: Appetite-regulating hormone (117 aa).

A signal peptide spans 1 to 23; that stretch reads MVSSATICSLLLLSMLWMDMAMA. Residue Ser26 is the site of O-decanoyl serine; alternate attachment. A lipid anchor (O-hexanoyl serine; alternate) is attached at Ser26. A lipid anchor (O-octanoyl serine; alternate) is attached at Ser26. The disordered stretch occupies residues 28–68; the sequence is LSPEHQKAQQRKESKKPPAKLQPRALEGWLHPEDRGQAEEA. Basic and acidic residues predominate over residues 31 to 43; the sequence is EHQKAQQRKESKK. Positions 52 to 75 are cleaved as a propeptide — removed in mature form; the sequence is ALEGWLHPEDRGQAEEAEEELEIR. Leu98 carries the leucine amide modification. A propeptide spans 99–117 (removed in mature form); sequence GKFLQDILWEEVKEAPANK.

This sequence belongs to the motilin family. Post-translationally, O-octanoylated by GOAT/MBOAT4. O-octanoylation is essential for ghrelin activity. The replacement of Ser-26 by aromatic tryptophan preserves ghrelin activity. Amidation of Leu-98 is essential for obestatin activity. Ghrelin is broadly expressed with higher expression in the stomach. Very low levels are detected in the hypothalamus, heart, lung, pancreas, intestine and adipose tissue. Obestatin is most highly expressed in jejunum, and also found in duodenum, stomach, pituitary, ileum, liver, hypothalamus and heart. Expressed in low levels in pancreas, cerebellum, cerebrum, kidney, testis, ovary colon and lung.

The protein localises to the secreted. In terms of biological role, ghrelin is the ligand for growth hormone secretagogue receptor type 1 (GHSR). Induces the release of growth hormone from the pituitary. Has an appetite-stimulating effect, induces adiposity and stimulates gastric acid secretion. Involved in growth regulation. Its function is as follows. Obestatin may be the ligand for GPR39. May have an appetite-reducing effect resulting in decreased food intake. May reduce gastric emptying activity and jejunal motility. The sequence is that of Appetite-regulating hormone (Ghrl) from Rattus norvegicus (Rat).